The primary structure comprises 921 residues: DNA mismatch repair protein MutS 1 (921 aa).

619–626 contributes to the ATP binding site; that stretch reads GPNMSGKS. A disordered region spans residues 837–887; that stretch reads FRDGAAQSGGAAAGSTAEPVATDGDPEHAPGEAAAEGPKGDERAASLDSET. A compositionally biased stretch (low complexity) spans 840–853; it reads GAAQSGGAAAGSTA.

This sequence belongs to the DNA mismatch repair MutS family.

This protein is involved in the repair of mismatches in DNA. It is possible that it carries out the mismatch recognition step. This protein has a weak ATPase activity. This is DNA mismatch repair protein MutS 1 from Haloarcula marismortui (strain ATCC 43049 / DSM 3752 / JCM 8966 / VKM B-1809) (Halobacterium marismortui).